Reading from the N-terminus, the 260-residue chain is Mitochondrial import inner membrane translocase subunit Tim29 (260 aa).

Residues 1-31 (MAAAALRRFWSRRRAEAGDAVVAKPGVWARL) constitute a mitochondrion transit peptide. Over 32–59 (GSWARALLRDYAEACRDASAEARARPGR) the chain is Mitochondrial matrix. The helical transmembrane segment at 60-77 (AAVYVGLLGGAAACFTLA) threads the bilayer. Over 78 to 260 (PSEGAFEEAL…HSLVQAEAPR (183 aa)) the chain is Mitochondrial intermembrane.

In terms of assembly, component of the TIM22 complex, which core is composed of TIMM22, associated with TIMM10 (TIMM10A and/or TIMM10B), TIMM9, AGK and TIMM29. Interacts with TIMM10B; the interaction is direct. Interacts with TOMM40; linking the TIM22 complex to the TOM complex. Interacts with TIMM22 (when oxidized); the interaction is direct.

The protein localises to the mitochondrion inner membrane. In terms of biological role, component of the TIM22 complex, a complex that mediates the import and insertion of multi-pass transmembrane proteins into the mitochondrial inner membrane. The TIM22 complex forms a twin-pore translocase that uses the membrane potential as the external driving force. Required for the stability of the TIM22 complex and functions in the assembly of the TIMM22 protein into the TIM22 complex. May facilitate cooperation between TIM22 and TOM complexes by interacting with TOMM40. This is Mitochondrial import inner membrane translocase subunit Tim29 from Homo sapiens (Human).